Reading from the N-terminus, the 506-residue chain is (+)-piperitol/(+)-sesamin synthase CYP81Q2 (506 aa).

A helical membrane pass occupies residues 3-23 (AEMLYSALALTFAIFMVYRIL). Cysteine 439 lines the heme pocket.

The protein belongs to the cytochrome P450 family. Requires heme as cofactor. In terms of tissue distribution, expressed in seeds.

The protein localises to the membrane. The catalysed reaction is (+)-piperitol + reduced [NADPH--hemoprotein reductase] + O2 = (+)-sesamin + oxidized [NADPH--hemoprotein reductase] + 2 H2O + H(+). It catalyses the reaction (+)-pinoresinol + reduced [NADPH--hemoprotein reductase] + O2 = (+)-piperitol + oxidized [NADPH--hemoprotein reductase] + 2 H2O + H(+). In terms of biological role, involved in the biosynthesis of (+)-sesamin, a furofuran class lignan. Functions in a dual catalytic mode. Catalyzes the synthesis of (+)-sesamin from (+)- pinoresinol by formation of two successive methylenedioxy bridges on (+)-pinoresinol and (+)-piperitol, respectively. This chain is (+)-piperitol/(+)-sesamin synthase CYP81Q2, found in Sesamum radiatum (Black benniseed).